Here is a 74-residue protein sequence, read N- to C-terminus: Antimicrobial peptide HsAp1 (74 aa).

The N-terminal stretch at 1–21 is a signal peptide; that stretch reads MSRRVILTLVLVTILVKTMAG. Positions 22-33 are excised as a propeptide; it reads MESKKVETTDEI. Pro-65 bears the Proline amide mark. Residues 69 to 74 constitute a propeptide that is removed on maturation; that stretch reads AISEQT.

It belongs to the non-disulfide-bridged peptide (NDBP) superfamily. Medium-length antimicrobial peptide (group 3) family. In terms of tissue distribution, expressed by the venom gland.

The protein localises to the secreted. Its subcellular location is the target cell membrane. Its function is as follows. Possesses antimicrobial activity against both Gram-negative (MIC=23.8-51.2 uM) and Gram-positive (MIC=11.8-46.5 uM) bacteria, as well as against the fungus C.tropicalis (MIC=48.6 uM). Also possesses a relatively high hemolytic activity. May act by disrupting the integrity of the bacterial cell membrane. This Heterometrus spinifer (Asia giant forest scorpion) protein is Antimicrobial peptide HsAp1.